We begin with the raw amino-acid sequence, 338 residues long: Cytochrome c biogenesis protein CcsA (338 aa).

8 consecutive transmembrane segments (helical) span residues phenylalanine 15 to proline 35, glycine 36 to leucine 56, leucine 71 to tryptophan 91, tryptophan 97 to leucine 117, valine 142 to isoleucine 162, isoleucine 246 to asparagine 266, tryptophan 273 to leucine 293, and alanine 307 to leucine 327.

This sequence belongs to the CcmF/CycK/Ccl1/NrfE/CcsA family. As to quaternary structure, may interact with ccs1.

It is found in the cellular thylakoid membrane. Required during biogenesis of c-type cytochromes (cytochrome c6 and cytochrome f) at the step of heme attachment. The polypeptide is Cytochrome c biogenesis protein CcsA (Picosynechococcus sp. (strain ATCC 27264 / PCC 7002 / PR-6) (Agmenellum quadruplicatum)).